Here is a 475-residue protein sequence, read N- to C-terminus: MSPQTETKASVGFKAGVKDYKLTYHTPDYETKDTDILAAFRVTPQPGVPAEEAGAAVAAESSTGTWTTVWTDGLTSLDRYKGRCYHIEPVAGEESQFIAYVAYPLDLFEEGSVTNMFTSIVGNVFGFKALRALRLEDLRIPTAYTKTFQGPPHGIQVERDKLNKYGRPLLGCTIKPKLGLSAKNYGRAVYECLRGGLDFTKDDENVNSQPFMRWRDRFLFCAEAIYKAQAETGEIKGHYLNATAGTCEEMMKRAVFARELGVPIVMHDYLTGGFTANTSLAHYCRDNGLLLHIHRAMHAVIDRQKNHGMHFRVLAKALRMSGGDHIHAGTVVGKLEGEREITLGFVDLLRDDYIEKDRSRGIYFTQDWVSLPGVLPVASGGIHVWHMPALTEIFGDDSVLQFGGGTLGHPWGNAPGAVANRVALEACVQARNEGRDLAREGNEIIRAAAKWSPELAAACEVWKEIKFEFPAMDTL.

Residues 1-2 (MS) constitute a propeptide that is removed on maturation. Pro-3 carries the post-translational modification N-acetylproline. Lys-14 is subject to N6,N6,N6-trimethyllysine. Substrate is bound by residues Asn-123 and Thr-173. Lys-175 functions as the Proton acceptor in the catalytic mechanism. Lys-177 is a substrate binding site. Residues Lys-201, Asp-203, and Glu-204 each coordinate Mg(2+). Lys-201 carries the N6-carboxylysine modification. The active-site Proton acceptor is His-294. Positions 295, 327, and 379 each coordinate substrate.

The protein belongs to the RuBisCO large chain family. Type I subfamily. As to quaternary structure, heterohexadecamer of 8 large chains and 8 small chains; disulfide-linked. The disulfide link is formed within the large subunit homodimers. The cofactor is Mg(2+). The disulfide bond which can form in the large chain dimeric partners within the hexadecamer appears to be associated with oxidative stress and protein turnover.

The protein resides in the plastid. It is found in the chloroplast. It carries out the reaction 2 (2R)-3-phosphoglycerate + 2 H(+) = D-ribulose 1,5-bisphosphate + CO2 + H2O. The enzyme catalyses D-ribulose 1,5-bisphosphate + O2 = 2-phosphoglycolate + (2R)-3-phosphoglycerate + 2 H(+). Functionally, ruBisCO catalyzes two reactions: the carboxylation of D-ribulose 1,5-bisphosphate, the primary event in carbon dioxide fixation, as well as the oxidative fragmentation of the pentose substrate in the photorespiration process. Both reactions occur simultaneously and in competition at the same active site. The polypeptide is Ribulose bisphosphate carboxylase large chain (Carpinus caroliniana (American hornbeam)).